The sequence spans 590 residues: V-type ATP synthase alpha chain (590 aa).

232 to 239 contributes to the ATP binding site; it reads GPFGSGKT.

Belongs to the ATPase alpha/beta chains family.

It carries out the reaction ATP + H2O + 4 H(+)(in) = ADP + phosphate + 5 H(+)(out). Functionally, produces ATP from ADP in the presence of a proton gradient across the membrane. The V-type alpha chain is a catalytic subunit. In Thermoanaerobacter sp. (strain X514), this protein is V-type ATP synthase alpha chain.